Here is a 20-residue protein sequence, read N- to C-terminus: Phospholipase A2 D5 (20 aa).

It depends on Ca(2+) as a cofactor. Post-translationally, contains seven disulfide bonds. Expressed by the venom gland.

The protein localises to the secreted. The catalysed reaction is a 1,2-diacyl-sn-glycero-3-phosphocholine + H2O = a 1-acyl-sn-glycero-3-phosphocholine + a fatty acid + H(+). PLA2 catalyzes the calcium-dependent hydrolysis of the 2-acyl groups in 3-sn-phosphoglycerides. The sequence is that of Phospholipase A2 D5 from Micrurus pyrrhocryptus (Coral snake).